A 125-amino-acid chain; its full sequence is Small ribosomal subunit protein uS12 (125 aa).

At aspartate 89 the chain carries 3-methylthioaspartic acid. The tract at residues 106–125 (GVKDRKQSRSKYGAKRPKKA) is disordered. Over residues 113 to 125 (SRSKYGAKRPKKA) the composition is skewed to basic residues.

Belongs to the universal ribosomal protein uS12 family. In terms of assembly, part of the 30S ribosomal subunit. Contacts proteins S8 and S17. May interact with IF1 in the 30S initiation complex.

In terms of biological role, with S4 and S5 plays an important role in translational accuracy. Interacts with and stabilizes bases of the 16S rRNA that are involved in tRNA selection in the A site and with the mRNA backbone. Located at the interface of the 30S and 50S subunits, it traverses the body of the 30S subunit contacting proteins on the other side and probably holding the rRNA structure together. The combined cluster of proteins S8, S12 and S17 appears to hold together the shoulder and platform of the 30S subunit. The protein is Small ribosomal subunit protein uS12 of Azoarcus sp. (strain BH72).